The following is a 369-amino-acid chain: Tryptophan 2,3-dioxygenase 2 (369 aa).

Residues 36–40 (FIVVH) and R107 contribute to the substrate site. Position 303 (H303) interacts with heme. T317 contributes to the substrate binding site.

It belongs to the tryptophan 2,3-dioxygenase family. In terms of assembly, homotetramer. It depends on heme as a cofactor.

The catalysed reaction is L-tryptophan + O2 = N-formyl-L-kynurenine. It participates in amino-acid degradation; L-tryptophan degradation via kynurenine pathway; L-kynurenine from L-tryptophan: step 1/2. Functionally, heme-dependent dioxygenase that catalyzes the oxidative cleavage of the L-tryptophan (L-Trp) pyrrole ring and converts L-tryptophan to N-formyl-L-kynurenine. Catalyzes the oxidative cleavage of the indole moiety. The chain is Tryptophan 2,3-dioxygenase 2 from Ralstonia nicotianae (strain ATCC BAA-1114 / GMI1000) (Ralstonia solanacearum).